We begin with the raw amino-acid sequence, 230 residues long: 7-cyano-7-deazaguanine synthase (230 aa).

I9 to L19 serves as a coordination point for ATP. The Zn(2+) site is built by C192, C202, C205, and C208.

This sequence belongs to the QueC family. Zn(2+) is required as a cofactor.

The enzyme catalyses 7-carboxy-7-deazaguanine + NH4(+) + ATP = 7-cyano-7-deazaguanine + ADP + phosphate + H2O + H(+). It functions in the pathway purine metabolism; 7-cyano-7-deazaguanine biosynthesis. Functionally, catalyzes the ATP-dependent conversion of 7-carboxy-7-deazaguanine (CDG) to 7-cyano-7-deazaguanine (preQ(0)). The polypeptide is 7-cyano-7-deazaguanine synthase (Myxococcus xanthus (strain DK1622)).